The primary structure comprises 183 residues: Mitochondrial import inner membrane translocase subunit tim17 (183 aa).

The next 3 membrane-spanning stretches (helical) occupy residues 13–33 (AGGA…GLGF), 57–77 (GGNF…LSYI), and 107–127 (VQAA…QHMM). Residues 131 to 141 (MQAQQEEMTQQ) are compositionally biased toward polar residues. The interval 131 to 183 (MQAQQEEMTQQHLEERKRYEEERKQREGERKKLNENGKSKKNKQQQNGENDLD) is disordered. Residues 142–168 (HLEERKRYEEERKQREGERKKLNENGK) are compositionally biased toward basic and acidic residues. The segment covering 174–183 (QQQNGENDLD) has biased composition (low complexity).

It belongs to the Tim17/Tim22/Tim23 family.

The protein resides in the mitochondrion inner membrane. Its function is as follows. May be involved in the translocation of transit peptide-containing proteins across the mitochondrial inner membrane. The chain is Mitochondrial import inner membrane translocase subunit tim17 (timm17) from Dictyostelium discoideum (Social amoeba).